Consider the following 534-residue polypeptide: Cytochrome P450 78A9 (534 aa).

Residues Leu26–Ser46 traverse the membrane as a helical segment. Residue Cys474 participates in heme binding.

Belongs to the cytochrome P450 family. It depends on heme as a cofactor. As to expression, expressed in the funiculus of developing ovules.

It localises to the membrane. Plays a role in seed and fruit development. Functions probably in association with CYP78A6 in the regulation of seed growth. In Arabidopsis thaliana (Mouse-ear cress), this protein is Cytochrome P450 78A9 (CYP78A9).